A 109-amino-acid polypeptide reads, in one-letter code: Elongation factor G, chloroplastic (109 aa).

Belongs to the GTP-binding elongation factor family. EF-G/EF-2 subfamily.

It is found in the plastid. The protein resides in the chloroplast. The protein operates within protein biosynthesis; polypeptide chain elongation. Chloroplast-localized elongation factor EF-G involved in protein synthesis in plastids. Catalyzes the GTP-dependent ribosomal translocation step during translation elongation. During this step, the ribosome changes from the pre-translocational (PRE) to the post-translocational (POST) state as the newly formed A-site-bound peptidyl-tRNA and P-site-bound deacylated tRNA move to the P and E sites, respectively. Catalyzes the coordinated movement of the two tRNA molecules, the mRNA and conformational changes in the ribosome. The protein is Elongation factor G, chloroplastic of Arachis hypogaea (Peanut).